Here is a 796-residue protein sequence, read N- to C-terminus: Lon protease (796 aa).

The region spanning 19 to 213 is the Lon N-terminal domain; it reads LPVVVTRGIF…LLKELIINRP (195 aa). 376-383 serves as a coordination point for ATP; the sequence is GPPGVGKT. The 182-residue stretch at 612-793 folds into the Lon proteolytic domain; the sequence is ESQVGVVTGL…EDVYEIIFKN (182 aa). Active-site residues include S699 and K742.

It belongs to the peptidase S16 family. Homohexamer. Organized in a ring with a central cavity.

Its subcellular location is the cytoplasm. The enzyme catalyses Hydrolysis of proteins in presence of ATP.. ATP-dependent serine protease that mediates the selective degradation of mutant and abnormal proteins as well as certain short-lived regulatory proteins. Required for cellular homeostasis and for survival from DNA damage and developmental changes induced by stress. Degrades polypeptides processively to yield small peptide fragments that are 5 to 10 amino acids long. Binds to DNA in a double-stranded, site-specific manner. This Mycoplasma mycoides subsp. mycoides SC (strain CCUG 32753 / NCTC 10114 / PG1) protein is Lon protease.